The following is a 1491-amino-acid chain: Membrane-associated guanylate kinase, WW and PDZ domain-containing protein 1 (1491 aa).

The region spanning 17-105 is the PDZ 1 domain; it reads ECTVKRGPQG…AVTFKAVRQG (89 aa). In terms of domain architecture, Guanylate kinase-like spans 96–287; that stretch reads AVTFKAVRQG…APITDPSQKF (192 aa). ATP is bound at residue 103-110; that stretch reads RQGGRLNK. Positions 236-267 are disordered; the sequence is AENEEEDDVPEMNSSFTADSGEQEEHTLQETA. Positions 300–333 constitute a WW 1 domain; it reads GPLPENWEMAYTENGEVYFIDHNTKTTSWLDPRC. A Phosphoserine modification is found at Ser-357. The 34-residue stretch at 359-392 folds into the WW 2 domain; sequence LELPAGWEKIEDPVYGIYYVDHINRKTQYENPVL. Over residues 411 to 421 the composition is skewed to low complexity; sequence QQQQQQQQQQQ. The interval 411–462 is disordered; that stretch reads QQQQQQQQQQQTEEWTEDHSALVPPVIPNHPPSNPEPAREVPLQGKPFFTRN. The span at 435–445 shows a compositional bias: pro residues; sequence PVIPNHPPSNP. In terms of domain architecture, PDZ 2 spans 472–554; it reads HTKLRKSSRG…GASVDLELCR (83 aa). Positions 586–600 are enriched in polar residues; sequence QETYDSPASHSSKTG. Disordered regions lie at residues 586–623, 720–832, and 932–987; these read QETY…SSHG, QRGG…FGEC, and TENE…GGGS. The region spanning 643 to 721 is the PDZ 3 domain; the sequence is TVHIVKGPMG…GSEVTLLVQR (79 aa). Phosphoserine is present on residues Ser-730 and Ser-741. A compositionally biased stretch (low complexity) spans 742–752; that stretch reads QNSSQHSVSSH. The span at 756 to 766 shows a compositional bias: polar residues; the sequence is HTASPSHSTQV. Ser-800 is subject to Phosphoserine. A PDZ 4 domain is found at 813–895; that stretch reads SGLSKGERER…DELICVDGTP (83 aa). Residues 939–951 are compositionally biased toward polar residues; that stretch reads PASSHHSSNQPAS. The PDZ 5 domain maps to 970 to 1066; sequence SSGSGSTSGI…DRILAVNGCS (97 aa). An interaction with FCHSD2 region spans residues 970–1066; sequence SSGSGSTSGI…DRILAVNGCS (97 aa). Positions 975–987 are enriched in gly residues; it reads STSGIGSGGGGGS. The residue at position 1071 (Ser-1071) is a Phosphoserine. Residues 1112-1130 are compositionally biased toward polar residues; the sequence is TTTHTPSQQGTQETRNTTK. Disordered regions lie at residues 1112–1143 and 1234–1491; these read TTTH…KAPQ and DGSV…DLSI. Residues 1124 to 1206 enclose the PDZ 6 domain; that stretch reads ETRNTTKPKQ…DEILEINGET (83 aa). 3 stretches are compositionally biased toward basic and acidic residues: residues 1278–1338, 1354–1396, and 1403–1491; these read DLHK…DAQA, KRRE…DGSP, and LERL…DLSI. Residues Ser-1361 and Ser-1412 each carry the phosphoserine modification.

In terms of assembly, part of a complex composed of AMOTL2, MAGI1 and CDH5, within the complex AMOTL2 acts as a scaffold protein for the interaction of MAGI1 with CDH5. The complex is required for coupling actin fibers to cell junctions in endothelial cells. Interacts through its WW 2 domain with SYNPO and through its PDZ 5 domain with ACTN4. Interacts with cytoplasmic domain of ADGRB1. Interacts via its WW domains with DRPLA. Interacts with ESAM, LRP2 and CXADR. May interact with CTNNB1. Interacts through its PDZ 1 domain with NET1. Interacts with ASIC3 and AMOT. Interacts with FCHSD2. Interacts with IGSF5/JAM4 and through its PDZ 2 and 3 domains with NPHS1 forming a tripartite complex. Interacts with DDN. Interacts with DLL1. Interacts with KCNJ10 and possibly with KCNJ10/KCNJ16 heterodimer; this interaction may facilitate KCNJ10/KCNJ16 potassium channel expression at the basolateral membrane in kidney tubular cells. Interacts with PRRG4 (via cytoplasmic domain). As to quaternary structure, interacts (via PDZ domain) with RAPGEF2. As to expression, widely expressed with the exception of skeletal muscle. Isoform 1, isoform 2 and isoform 6 are highly expressed in colon, kidney, lung, liver, and pancreas. Isoform 5 is predominantly expressed in brain and heart. Isoform 3 and isoform 4 are highly expressed in pancreas and brain.

It localises to the cell junction. Its subcellular location is the tight junction. The protein resides in the cell membrane. In terms of biological role, plays a role in coupling actin fibers to cell junctions in endothelial cells, via its interaction with AMOTL2 and CDH5. May regulate acid-induced ASIC3 currents by modulating its expression at the cell surface. In Homo sapiens (Human), this protein is Membrane-associated guanylate kinase, WW and PDZ domain-containing protein 1 (MAGI1).